The chain runs to 275 residues: Ribosomal RNA small subunit methyltransferase A (275 aa).

Positions 19, 21, 46, 71, 94, and 117 each coordinate S-adenosyl-L-methionine.

Belongs to the class I-like SAM-binding methyltransferase superfamily. rRNA adenine N(6)-methyltransferase family. RsmA subfamily.

It localises to the cytoplasm. It carries out the reaction adenosine(1518)/adenosine(1519) in 16S rRNA + 4 S-adenosyl-L-methionine = N(6)-dimethyladenosine(1518)/N(6)-dimethyladenosine(1519) in 16S rRNA + 4 S-adenosyl-L-homocysteine + 4 H(+). In terms of biological role, specifically dimethylates two adjacent adenosines (A1518 and A1519) in the loop of a conserved hairpin near the 3'-end of 16S rRNA in the 30S particle. May play a critical role in biogenesis of 30S subunits. The sequence is that of Ribosomal RNA small subunit methyltransferase A from Burkholderia lata (strain ATCC 17760 / DSM 23089 / LMG 22485 / NCIMB 9086 / R18194 / 383).